The chain runs to 881 residues: Heat shock protein 70 homolog LHS1 (881 aa).

A signal peptide spans methionine 1–alanine 20. Asparagine 128, asparagine 458, asparagine 474, asparagine 481, asparagine 489, asparagine 527, and asparagine 844 each carry an N-linked (GlcNAc...) asparagine glycan. A compositionally biased stretch (basic and acidic residues) spans arginine 833–asparagine 844. The interval arginine 833–leucine 881 is disordered. Residues threonine 859–serine 871 show a composition bias toward polar residues. Positions serine 872–leucine 881 are enriched in acidic residues. The Prevents secretion from ER motif lies at histidine 878–leucine 881.

This sequence belongs to the heat shock protein 70 family. In terms of assembly, interacts with the heat shock protein 70 (HSP70) KAR2, and this stimulates nucleotide exchange on KAR2. KAR2 in turn acts to stimulate the ATPase activity of LHS1. N-glycosylated.

Its subcellular location is the endoplasmic reticulum lumen. It carries out the reaction ATP + H2O = ADP + phosphate + H(+). In terms of biological role, chaperone required for protein translocation and folding in the endoplasmic reticulum. This chain is Heat shock protein 70 homolog LHS1 (LHS1), found in Saccharomyces cerevisiae (strain ATCC 204508 / S288c) (Baker's yeast).